Consider the following 1791-residue polypeptide: 1-phosphatidylinositol-3-phosphate 5-kinase FAB1B (1791 aa).

The segment at 39 to 105 adopts an FYVE-type zinc-finger fold; that stretch reads DQSCRVCYEC…VCNYCFRQWE (67 aa). Zn(2+)-binding residues include Cys45, Cys48, Cys61, Cys64, Cys69, Cys72, Cys97, and Cys100. Disordered regions lie at residues 166-186, 279-370, 770-790, and 834-859; these read HGVS…SRRS, EQFQ…DRTT, SDLS…NPIV, and QQNN…DHQS. Positions 279–293 are enriched in basic and acidic residues; the sequence is EQFQKKSEHDGRDEC. Positions 324-345 are enriched in acidic residues; that stretch reads PENEEDERESALFDEEDNEGDA. Residues 838-850 are compositionally biased toward basic and acidic residues; that stretch reads EKPKETQSQKEEF. The stretch at 1077–1111 forms a coiled coil; sequence EKGFRRRIGELEEVLQKEKAEFEENMQKILHREVN. A compositionally biased stretch (basic and acidic residues) spans 1151-1164; it reads NSDDTKREENEKPP. The segment at 1151-1242 is disordered; that stretch reads NSDDTKREEN…DTSYPLENKV (92 aa). 2 stretches are compositionally biased toward polar residues: residues 1167–1188 and 1196–1206; these read KSQT…SEVN and TGDTGSLNNVQ. In terms of domain architecture, PIPK spans 1433–1758; that stretch reads SELNIPRPVD…RFRKAMTTYF (326 aa). The disordered stretch occupies residues 1769–1791; sequence NVVANNSKSDQPEETSQAGTQAE. Over residues 1771–1791 the composition is skewed to polar residues; the sequence is VANNSKSDQPEETSQAGTQAE.

As to quaternary structure, component of the PI(3,5)P2 regulatory complex at least composed of ATG18, SAC/FIG4, FAB1 and VAC14. It depends on Mg(2+) as a cofactor. Mn(2+) is required as a cofactor. In terms of tissue distribution, ubiquitous with highest expression levels in the root hair zone, pollen, and stamens.

The protein resides in the endosome membrane. The catalysed reaction is a 1,2-diacyl-sn-glycero-3-phospho-(1D-myo-inositol-3-phosphate) + ATP = a 1,2-diacyl-sn-glycero-3-phospho-(1D-myo-inositol-3,5-bisphosphate) + ADP + H(+). Its function is as follows. The PI(3,5)P2 regulatory complex regulates both the synthesis and turnover of phosphatidylinositol 3,5-bisphosphate (PtdIns(3,5)P2). Catalyzes the phosphorylation of phosphatidylinositol 3-phosphate on the fifth hydroxyl of the myo-inositol ring, to form phosphatidylinositol 3,5-bisphosphate. Plays an important role in maintenance of endomembrane homeostasis including endocytosis, vacuole formation, and vacuolar acidification processes. Required for development of viable pollen. Might mediate recycling of auxin transporters. The sequence is that of 1-phosphatidylinositol-3-phosphate 5-kinase FAB1B (FAB1B) from Arabidopsis thaliana (Mouse-ear cress).